A 345-amino-acid chain; its full sequence is Uroporphyrinogen decarboxylase (345 aa).

Residues 27–31 (RQAGR), Phe-46, Asp-76, Tyr-152, Ser-207, and His-321 each bind substrate.

The protein belongs to the uroporphyrinogen decarboxylase family. In terms of assembly, homodimer.

It localises to the cytoplasm. It carries out the reaction uroporphyrinogen III + 4 H(+) = coproporphyrinogen III + 4 CO2. The protein operates within porphyrin-containing compound metabolism; protoporphyrin-IX biosynthesis; coproporphyrinogen-III from 5-aminolevulinate: step 4/4. In terms of biological role, catalyzes the decarboxylation of four acetate groups of uroporphyrinogen-III to yield coproporphyrinogen-III. This Staphylococcus aureus (strain Mu3 / ATCC 700698) protein is Uroporphyrinogen decarboxylase.